A 313-amino-acid polypeptide reads, in one-letter code: MSQEFAHLSVLLEETVGGLNIKDDGIYIDGTFGRGGHSRQILQRLGENGRLIAIDRDPQAIEAAKQFADDPRFQIVHGGFGQLADYVEELGLVGKIDGVLLDLGVSSPQLDDAERGFSFLRDGPLDMRMDNSQGETAAQWLARAEIEDMAWVFKTYGEEKNARHIARCIAADRDKTPFLRTKDLADLIARITKNKERNKHPATRVFQAIRIYINSELDQIDQALEGALTVLAPQGRLSIISFHSLEDRIVKRFIRRHSQGESVPHGLPITEDQINKSRKLRAIGKAIMPSDEEIERNARARSSVLRIAERLDY.

Residues 35-37 (GGH), Asp55, Phe80, Asp102, and Gln109 contribute to the S-adenosyl-L-methionine site.

The protein belongs to the methyltransferase superfamily. RsmH family.

It localises to the cytoplasm. It catalyses the reaction cytidine(1402) in 16S rRNA + S-adenosyl-L-methionine = N(4)-methylcytidine(1402) in 16S rRNA + S-adenosyl-L-homocysteine + H(+). In terms of biological role, specifically methylates the N4 position of cytidine in position 1402 (C1402) of 16S rRNA. This is Ribosomal RNA small subunit methyltransferase H from Shewanella sp. (strain MR-7).